The sequence spans 391 residues: Acetate kinase (391 aa).

Mg(2+) is bound at residue N4. K11 is an ATP binding site. R85 lines the substrate pocket. D142 functions as the Proton donor/acceptor in the catalytic mechanism. ATP contacts are provided by residues 202–206 (HLGNG), 277–279 (DLR), and 325–329 (GIGEN). E378 lines the Mg(2+) pocket.

Belongs to the acetokinase family. As to quaternary structure, homodimer. Mg(2+) is required as a cofactor. Mn(2+) serves as cofactor.

It localises to the cytoplasm. The enzyme catalyses acetate + ATP = acetyl phosphate + ADP. It participates in metabolic intermediate biosynthesis; acetyl-CoA biosynthesis; acetyl-CoA from acetate: step 1/2. Catalyzes the formation of acetyl phosphate from acetate and ATP. Can also catalyze the reverse reaction. The sequence is that of Acetate kinase from Halalkalibacterium halodurans (strain ATCC BAA-125 / DSM 18197 / FERM 7344 / JCM 9153 / C-125) (Bacillus halodurans).